Here is a 215-residue protein sequence, read N- to C-terminus: 3-demethoxyubiquinol 3-hydroxylase (215 aa).

The Fe cation site is built by Glu64, Glu94, His97, Glu146, Glu178, and His181.

This sequence belongs to the COQ7 family. Fe cation serves as cofactor.

The protein resides in the cell membrane. It carries out the reaction a 5-methoxy-2-methyl-3-(all-trans-polyprenyl)benzene-1,4-diol + AH2 + O2 = a 3-demethylubiquinol + A + H2O. The protein operates within cofactor biosynthesis; ubiquinone biosynthesis. Catalyzes the hydroxylation of 2-nonaprenyl-3-methyl-6-methoxy-1,4-benzoquinol during ubiquinone biosynthesis. This is 3-demethoxyubiquinol 3-hydroxylase from Bordetella avium (strain 197N).